Reading from the N-terminus, the 72-residue chain is UPF0352 protein swp_2271 (72 aa).

This sequence belongs to the UPF0352 family.

This is UPF0352 protein swp_2271 from Shewanella piezotolerans (strain WP3 / JCM 13877).